Here is a 261-residue protein sequence, read N- to C-terminus: Fructoselysine 6-kinase (261 aa).

The protein belongs to the carbohydrate kinase PfkB family. In terms of assembly, monomer.

It catalyses the reaction N(6)-(D-fructosyl)-L-lysine + ATP = N(6)-(6-phospho-D-fructosyl)-L-lysine + ADP + H(+). Its pathway is carbohydrate metabolism; fructoselysine degradation; D-glucose 6-phosphate and lysine from fructoselysine: step 1/2. In terms of biological role, catalyzes the ATP-dependent phosphorylation of fructoselysine to fructoselysine 6-phosphate. Functions in a fructoselysine degradation pathway that allows E.coli to grow on fructoselysine or psicoselysine. To a much lesser extenst, is also able to phosphorylate psicoselysine. The protein is Fructoselysine 6-kinase of Escherichia coli (strain K12).